The sequence spans 310 residues: Ribosomal RNA small subunit methyltransferase H (310 aa).

S-adenosyl-L-methionine-binding positions include 47 to 49, D66, F93, D108, and Q115; that span reads GGH.

The protein belongs to the methyltransferase superfamily. RsmH family.

It localises to the cytoplasm. The catalysed reaction is cytidine(1402) in 16S rRNA + S-adenosyl-L-methionine = N(4)-methylcytidine(1402) in 16S rRNA + S-adenosyl-L-homocysteine + H(+). Functionally, specifically methylates the N4 position of cytidine in position 1402 (C1402) of 16S rRNA. The chain is Ribosomal RNA small subunit methyltransferase H from Prochlorococcus marinus (strain MIT 9303).